A 465-amino-acid chain; its full sequence is Uronate isomerase (465 aa).

The protein belongs to the metallo-dependent hydrolases superfamily. Uronate isomerase family.

The enzyme catalyses D-glucuronate = D-fructuronate. The catalysed reaction is aldehydo-D-galacturonate = keto-D-tagaturonate. It functions in the pathway carbohydrate metabolism; pentose and glucuronate interconversion. The chain is Uronate isomerase from Streptococcus equi subsp. equi (strain 4047).